A 131-amino-acid chain; its full sequence is M-zodatoxin-Lt8m (131 aa).

The N-terminal stretch at 1–20 is a signal peptide; that stretch reads MKYFVVALALVAAFACIAES. A propeptide spanning residues 21–60 is cleaved from the precursor; it reads KPAESEHELAEVEEENELADLEDAVWLEHLADLSDLEEAR.

Belongs to the cationic peptide 06 (cytoinsectotoxin) family. As to expression, expressed by the venom gland.

The protein localises to the secreted. Insecticidal, cytolytic and antimicrobial peptide. Forms voltage-dependent, ion-permeable channels in membranes. At high concentration causes cell membrane lysis. The polypeptide is M-zodatoxin-Lt8m (cit 1-13) (Lachesana tarabaevi (Spider)).